The sequence spans 259 residues: Ribonuclease HII (259 aa).

The 189-residue stretch at 70–258 (TLIAGIDEVG…VKSLVLGKKE (189 aa)) folds into the RNase H type-2 domain. D76, E77, and D168 together coordinate a divalent metal cation.

This sequence belongs to the RNase HII family. Mn(2+) serves as cofactor. Requires Mg(2+) as cofactor.

The protein localises to the cytoplasm. The enzyme catalyses Endonucleolytic cleavage to 5'-phosphomonoester.. Functionally, endonuclease that specifically degrades the RNA of RNA-DNA hybrids. The polypeptide is Ribonuclease HII (Streptococcus pneumoniae serotype 4 (strain ATCC BAA-334 / TIGR4)).